Consider the following 443-residue polypeptide: Putative F-box/FBD/LRR-repeat protein At5g22670 (443 aa).

The F-box domain maps to 10 to 56 (QDSISLLPDDLLCRILSNLPTKVAVRTSVLSKRWKRFSLSVPLLEFN). 5 LRR repeats span residues 139 to 165 (SLRL…HLID), 166 to 191 (NIYP…NVSR), 219 to 243 (YGDI…SLRD), 275 to 300 (NFLL…TMSG), and 325 to 353 (YAVF…VLEL). The region spanning 361–412 (LLILSSSIPKCLRSSLEHVEIHTPISGAEAEMKLVKYFLENSAVLKKFTLQL) is the FBD domain.

This chain is Putative F-box/FBD/LRR-repeat protein At5g22670, found in Arabidopsis thaliana (Mouse-ear cress).